We begin with the raw amino-acid sequence, 588 residues long: Pre-mRNA 3'-end-processing factor FIP1 (588 aa).

Residues 1–10 (MSAGEVERLV) show a composition bias toward basic and acidic residues. Disordered regions lie at residues 1–81 (MSAG…EDDV), 223–291 (QGRT…ESPD), and 334–588 (VDNN…TPAE). The segment at 1-96 (MSAGEVERLV…DIKTGAPQYG (96 aa)) is sufficient for interaction with PAPOLA. The interval 1 to 341 (MSAGEVERLV…TAVDNNFSKP (341 aa)) is necessary for stimulating PAPOLA activity. 2 stretches are compositionally biased toward acidic residues: residues 19–40 (GDEEEEWLYGDENEVERPEEEN) and 66–80 (TEDDSDSDSDDDEDD). A phosphoserine mark is found at serine 70, serine 72, and serine 74. Residues 122–228 (KGVDLDAPGS…FKVQQGRTGN (107 aa)) are sufficient for interaction with CPSF4. The segment covering 259 to 270 (STSSQSQTSTAS) has biased composition (low complexity). The segment covering 280–291 (WQDRYGRAESPD) has biased composition (basic and acidic residues). Phosphoserine is present on serine 289. The segment covering 340–398 (KPPPFFPPGAPPTHLPPPPFLPPPPTVSTAPPLIPPPGIPITVPPPGFPPPPGAPPPSL) has biased composition (pro residues). At tyrosine 420 the chain carries Phosphotyrosine. The sufficient for interaction with CPSF1 and CSTF3 stretch occupies residues 437 to 588 (SLVDTSKQWD…QESTEATPAE (152 aa)). Residues 448-486 (YARREKDRDRERDRDRERDRDRDRERERTRERERERDHS) show a composition bias toward basic and acidic residues. The interval 451–484 (REKDRDRERDRDRERDRDRDRERERTRERERERD) is arg/Asp/Glu-rich domain. A Phosphoserine modification is found at serine 486. Threonine 488 is modified (phosphothreonine). Phosphoserine occurs at positions 490 and 494. The segment covering 495-522 (DEERYRYREYAERGYERHRASREKEERH) has biased composition (basic and acidic residues). Basic residues predominate over residues 536–545 (KSSRSNSRRR). Serine 548 carries the phosphoserine modification. Residues 554–564 (HRRHKHKKSKR) show a composition bias toward basic residues.

The protein belongs to the FIP1 family. Component of the cleavage and polyadenylation specificity factor (CPSF) complex, composed of CPSF1, CPSF2, CPSF3, CPSF4 and FIP1L1. Found in a complex with CPSF1, FIP1L1 and PAPOLA. Interacts with CPSF1, CPSF4, CSTF2 and CSTF3. Interacts with AHCYL1 (when phosphorylated); the interaction is direct and associates AHCYL1 with the CPSF complex and RNA. Interacts with PAPOLA; the interaction seems to be increased by the interaction with AHCYL1. Interacts with NUDT21/CPSF5; this interaction occurs in a RNA sequence-specific manner. Interacts (preferentially via unphosphorylated form and Arg/Glu/Asp-rich domain) with CPSF6 (via Arg/Ser-rich domain); this interaction mediates, at least in part, the interaction between the CFIm and CPSF complexes and may be inhibited by CPSF6 hyper-phosphorylation. Interacts (preferentially via unphosphorylated form and Arg/Asp/Glu-rich domain) with CPSF7 (via Arg/Ser-rich domain); this interaction mediates, at least in part, the interaction between the CFIm and CPSF complexes and may be inhibited by CPSF7 hyper-phosphorylation.

The protein resides in the nucleus. Its function is as follows. Component of the cleavage and polyadenylation specificity factor (CPSF) complex that plays a key role in pre-mRNA 3'-end formation, recognizing the AAUAAA signal sequence and interacting with poly(A) polymerase and other factors to bring about cleavage and poly(A) addition. FIP1L1 contributes to poly(A) site recognition and stimulates poly(A) addition. Binds to U-rich RNA sequence elements surrounding the poly(A) site. May act to tether poly(A) polymerase to the CPSF complex. The polypeptide is Pre-mRNA 3'-end-processing factor FIP1 (FIP1L1) (Pongo abelii (Sumatran orangutan)).